The primary structure comprises 291 residues: ATP synthase subunit a (291 aa).

Helical transmembrane passes span 50 to 70 (LDSMGWSIGLGVIFCLLFWIV), 108 to 128 (IAPLALTIFVWIFLMNLMDLI), 161 to 181 (DPNITLGMSLSVFVLILFYSI), 203 to 223 (PVAKALLIPVNLILELVTFLA), 241 to 261 (LIFILIALLPFWIQWALSVPW), and 262 to 282 (AIFHILVITLQAFIFMMLTIV).

It belongs to the ATPase A chain family. In terms of assembly, F-type ATPases have 2 components, CF(1) - the catalytic core - and CF(0) - the membrane proton channel. CF(1) has five subunits: alpha(3), beta(3), gamma(1), delta(1), epsilon(1). CF(0) has three main subunits: a(1), b(2) and c(9-12). The alpha and beta chains form an alternating ring which encloses part of the gamma chain. CF(1) is attached to CF(0) by a central stalk formed by the gamma and epsilon chains, while a peripheral stalk is formed by the delta and b chains.

The protein resides in the cell inner membrane. Functionally, key component of the proton channel; it plays a direct role in the translocation of protons across the membrane. This chain is ATP synthase subunit a, found in Acinetobacter baumannii (strain SDF).